The primary structure comprises 138 residues: Basic phospholipase A2 myotoxin I (138 aa).

The signal sequence occupies residues 1-16 (MRTLWIMAVLLVGVEG). 7 disulfide bridges follow: cysteine 42/cysteine 131, cysteine 44/cysteine 60, cysteine 59/cysteine 111, cysteine 65/cysteine 138, cysteine 66/cysteine 104, cysteine 73/cysteine 97, and cysteine 91/cysteine 102. Tyrosine 43, glycine 45, and glycine 47 together coordinate Ca(2+). Residue histidine 63 is part of the active site. Aspartate 64 provides a ligand contact to Ca(2+). Residue aspartate 105 is part of the active site.

It belongs to the phospholipase A2 family. Group II subfamily. D49 sub-subfamily. In terms of assembly, monomer. Homodimer; non-covalently linked (alternative/compact dimer conformation). Ca(2+) is required as a cofactor. In terms of tissue distribution, expressed by the venom gland.

The protein localises to the secreted. It catalyses the reaction a 1,2-diacyl-sn-glycero-3-phosphocholine + H2O = a 1-acyl-sn-glycero-3-phosphocholine + a fatty acid + H(+). High level of membrane cholesterol content reduces cytolytic activity, whereas low level of membrane cholesterol content increases cytolytic activity. Snake venom phospholipase A2 (PLA2) that displays local myotoxic activity. It also displays anticoagulant action in plasma and edema-inducing activities. In addition, it shows cytotoxic activity to a variety of cell types and bactericidal activity to a variety of Gram-negative and Gram-positive bacteria. PLA2 catalyzes the calcium-dependent hydrolysis of the 2-acyl groups in 3-sn-phosphoglycerides. The chain is Basic phospholipase A2 myotoxin I from Bothrops asper (Terciopelo).